A 2779-amino-acid chain; its full sequence is Protein lava lamp (2779 aa).

3 disordered regions span residues 31–62 (LAGS…DSLK), 79–98 (ALRK…SMES), and 110–135 (KTRS…VSLL). The span at 33 to 51 (GSSNDLSSLQNVSASTTRG) shows a compositional bias: polar residues. 2 positions are modified to phosphoserine: Ser-34 and Ser-35. Residues 52-85 (TKGKGRLDSLKENLYKQQERLTALKERALRKSQD) are a coiled coil. Over residues 79 to 91 (ALRKSQDERHKSS) the composition is skewed to basic and acidic residues. Ser-95, Ser-98, Ser-122, and Ser-133 each carry phosphoserine. The stretch at 141-175 (EKLLMLTQRTEQNRALLEQRKRDLAKSLLSVKSNI) forms a coiled coil. Residues Ser-186, Ser-352, and Ser-354 each carry the phosphoserine modification. Coiled-coil stretches lie at residues 220–607 (ESRV…AESI) and 659–716 (GETL…KDLI). The span at 337–352 (ERQRNLELEQEQEKAS) shows a compositional bias: basic and acidic residues. Disordered stretches follow at residues 337–366 (ERQR…DAQV), 622–662 (RPAS…GETL), 711–730 (REKD…QELS), and 1716–1753 (QAQL…GGDA). Low complexity-rich tracts occupy residues 717 to 730 (SSTS…QELS) and 1716 to 1740 (QAQL…QSQQ). Coiled-coil stretches lie at residues 751 to 1733 (LFEK…QHHH), 1785 to 1863 (TIED…KLIQ), and 1941 to 2433 (NEAP…QSQN). 4 disordered regions span residues 2348–2367 (EDKE…GETV), 2484–2507 (EEVT…EATS), 2552–2578 (NRGG…TANE), and 2633–2665 (TERS…AGSN). Over residues 2488 to 2502 (QQQQRELPQSQQSTQ) the composition is skewed to low complexity. Residues 2504–2544 (EATSDIMQKMQKALETQEMEIVTLKEQLAIRSAEYARLAAQ) are a coiled coil. Residues 2600 to 2641 (DMRVEEMIVELVQLLEERDHLQLKLSDTLRQLETERSRVSDE) adopt a coiled-coil conformation. The span at 2643 to 2665 (SATASSSAASSSSPSKISSAGSN) shows a compositional bias: low complexity.

In terms of assembly, interacts with CLIP-190 and spectrin separately.

The protein localises to the golgi apparatus. Its subcellular location is the cytoplasmic vesicle. The protein resides in the autophagosome. Its function is as follows. Lva and spectrin may form a Golgi-based scaffold that mediates interaction of Golgi bodies with microtubules and facilitates Golgi-derived membrane secretion required for the formation of furrows during cellularization. Under starvation conditions recruited by ema to developing autophagsosomes where it may function in autophagosome growth. In Drosophila melanogaster (Fruit fly), this protein is Protein lava lamp (lva).